A 249-amino-acid chain; its full sequence is Tryptophan synthase alpha chain (249 aa).

Active-site proton acceptor residues include E43 and D54.

It belongs to the TrpA family. As to quaternary structure, tetramer of two alpha and two beta chains.

The enzyme catalyses (1S,2R)-1-C-(indol-3-yl)glycerol 3-phosphate + L-serine = D-glyceraldehyde 3-phosphate + L-tryptophan + H2O. It participates in amino-acid biosynthesis; L-tryptophan biosynthesis; L-tryptophan from chorismate: step 5/5. Its function is as follows. The alpha subunit is responsible for the aldol cleavage of indoleglycerol phosphate to indole and glyceraldehyde 3-phosphate. This chain is Tryptophan synthase alpha chain, found in Campylobacter jejuni subsp. doylei (strain ATCC BAA-1458 / RM4099 / 269.97).